Reading from the N-terminus, the 441-residue chain is D-aminoacyl-tRNA deacylase (441 aa).

It belongs to the DtdA deacylase family. In terms of assembly, monomer. Zn(2+) is required as a cofactor.

It catalyses the reaction a D-aminoacyl-tRNA + H2O = a tRNA + a D-alpha-amino acid + H(+). It carries out the reaction glycyl-tRNA(Ala) + H2O = tRNA(Ala) + glycine + H(+). Its function is as follows. D-aminoacyl-tRNA deacylase with broad substrate specificity. By recycling D-aminoacyl-tRNA to D-amino acids and free tRNA molecules, this enzyme counteracts the toxicity associated with the formation of D-aminoacyl-tRNA entities in vivo. The polypeptide is D-aminoacyl-tRNA deacylase (Natronomonas pharaonis (strain ATCC 35678 / DSM 2160 / CIP 103997 / JCM 8858 / NBRC 14720 / NCIMB 2260 / Gabara) (Halobacterium pharaonis)).